The following is a 148-amino-acid chain: MNFSVVAVALVVVLTVHFTDGQETSSSLPSPPSPLPGRWPWGPKPWHCRPHHHGFTMIYGCEKFSRDMKKEMDALRNNGSESCRTLSTWVEQENCKFEQLMDARSRVVPEEKCLQNMVAFATGITPSTTVTTPTPTTETPTTETPSTP.

The N-terminal stretch at 1-21 is a signal peptide; the sequence is MNFSVVAVALVVVLTVHFTDG. A propeptide spanning residues 22 to 38 is cleaved from the precursor; that stretch reads QETSSSLPSPPSPLPGR. A disordered region spans residues 125–148; the sequence is TPSTTVTTPTPTTETPTTETPSTP.

In terms of processing, contains 2 disulfide bonds. In terms of tissue distribution, expressed by the venom gland.

The protein localises to the secreted. In terms of biological role, probable ion channel inhibitor. This Hadronyche infensa (Fraser island funnel-web spider) protein is U5-hexatoxin-Hi1a.